The primary structure comprises 535 residues: Calcium-dependent protein kinase 7 (535 aa).

The disordered stretch occupies residues 1 to 29 (MGNCCGNPSSATNQSKQGKPKNKNNPFYS). Gly-2 carries N-myristoyl glycine lipidation. Positions 59–317 (YDLGREVGRG…AAQVLEHTWI (259 aa)) constitute a Protein kinase domain. Residues 65 to 73 (VGRGEFGIT) and Lys-88 each bind ATP. Asp-183 (proton acceptor) is an active-site residue. Ser-223 bears the Phosphoserine mark. Residues 323–353 (APNVSLGETVKARLKQFSVMNKLKKRALRVI) form an autoinhibitory domain region. 4 EF-hand domains span residues 360 to 395 (EEAA…AGQQ), 396 to 431 (IADT…LKKM), 432 to 467 (ANDE…ELDN), and 468 to 504 (TSSE…GTDW). Residues Asp-373, Asn-375, Lys-379, Glu-384, Asp-409, Asp-411, Asp-413, Thr-415, Glu-420, Asp-445, Asn-447, Ser-449, Tyr-451, Glu-456, Asp-482, Asp-484, Asp-486, and Arg-488 each coordinate Ca(2+). At Ser-490 the chain carries Phosphoserine. Ca(2+) is bound at residue Glu-493.

The protein belongs to the protein kinase superfamily. Ser/Thr protein kinase family. CDPK subfamily.

It localises to the cell membrane. The catalysed reaction is L-seryl-[protein] + ATP = O-phospho-L-seryl-[protein] + ADP + H(+). The enzyme catalyses L-threonyl-[protein] + ATP = O-phospho-L-threonyl-[protein] + ADP + H(+). With respect to regulation, activated by calcium. Autophosphorylation may play an important role in the regulation of the kinase activity. May play a role in signal transduction pathways that involve calcium as a second messenger. This is Calcium-dependent protein kinase 7 (CPK7) from Arabidopsis thaliana (Mouse-ear cress).